The primary structure comprises 680 residues: Nodulation protein NolNO (680 aa).

Belongs to the NodU/CmcH family.

Its subcellular location is the cytoplasm. Functionally, involved in the O-carbamoylation of nod factors. This is Nodulation protein NolNO (nolO) from Sinorhizobium fredii (strain NBRC 101917 / NGR234).